Consider the following 369-residue polypeptide: S-(hydroxymethyl)glutathione dehydrogenase (369 aa).

Zn(2+) is bound by residues cysteine 40, histidine 62, cysteine 92, cysteine 95, cysteine 98, cysteine 106, and cysteine 169.

This sequence belongs to the zinc-containing alcohol dehydrogenase family. Class-III subfamily. In terms of assembly, homodimer. Zn(2+) is required as a cofactor.

It is found in the cytoplasm. The catalysed reaction is S-(hydroxymethyl)glutathione + NADP(+) = S-formylglutathione + NADPH + H(+). It catalyses the reaction S-(hydroxymethyl)glutathione + NAD(+) = S-formylglutathione + NADH + H(+). It carries out the reaction a primary alcohol + NAD(+) = an aldehyde + NADH + H(+). The enzyme catalyses a secondary alcohol + NAD(+) = a ketone + NADH + H(+). The catalysed reaction is S-nitrosoglutathione + NADH + H(+) = S-(hydroxysulfenamide)glutathione + NAD(+). Has high formaldehyde dehydrogenase activity in the presence of glutathione and catalyzes the oxidation of normal alcohols in a reaction that is not GSH-dependent. In addition, hemithiolacetals other than those formed from GSH, including omega-thiol fatty acids, also are substrates. Also acts as a S-nitroso-glutathione reductase by catalyzing the NADH-dependent reduction of S-nitrosoglutathione. In Synechocystis sp. (strain ATCC 27184 / PCC 6803 / Kazusa), this protein is S-(hydroxymethyl)glutathione dehydrogenase (frmA).